Consider the following 255-residue polypeptide: 5'-nucleotidase SurE (255 aa).

Aspartate 8, aspartate 9, serine 39, and asparagine 91 together coordinate a divalent metal cation.

This sequence belongs to the SurE nucleotidase family. A divalent metal cation is required as a cofactor.

The protein resides in the cytoplasm. The catalysed reaction is a ribonucleoside 5'-phosphate + H2O = a ribonucleoside + phosphate. Nucleotidase that shows phosphatase activity on nucleoside 5'-monophosphates. The chain is 5'-nucleotidase SurE from Acinetobacter baumannii (strain AB0057).